We begin with the raw amino-acid sequence, 63 residues long: H/ACA ribonucleoprotein complex subunit 3-like protein (63 aa).

The segment at 18–40 (KMDPEGKPTLSAHPARFSPDDKY) is disordered.

It belongs to the NOP10 family. As to quaternary structure, component of the small nucleolar ribonucleoprotein particles containing H/ACA-type snoRNAs (H/ACA snoRNPs).

It is found in the nucleus. It localises to the nucleolus. In terms of biological role, required for ribosome biogenesis. Part of a complex which catalyzes pseudouridylation of rRNA. This involves the isomerization of uridine such that the ribose is subsequently attached to C5, instead of the normal N1. Pseudouridine ('psi') residues may serve to stabilize the conformation of rRNAs. This is H/ACA ribonucleoprotein complex subunit 3-like protein from Trypanosoma cruzi.